The following is a 208-amino-acid chain: MVNKRMQTLLMQLRQQGIHDERLLQAIEAVPRERFVDEALAHKAYENTALPIGAGQTISQPYMVARMTELLQLTPTSRVLEIGTGSGYQTAILAHLVDHVCSVERIKGLQWQAKRRLKQLDLHNVSTRHGDGWLGWQSRGPFDAIIVTAAPPEIPDALLEQLDEGGILVLPVGEQFQTLKYVQRRNNEYHIETVEAVRFVPLVKGELA.

The active site involves Ser-59.

This sequence belongs to the methyltransferase superfamily. L-isoaspartyl/D-aspartyl protein methyltransferase family.

The protein resides in the cytoplasm. It carries out the reaction [protein]-L-isoaspartate + S-adenosyl-L-methionine = [protein]-L-isoaspartate alpha-methyl ester + S-adenosyl-L-homocysteine. Functionally, catalyzes the methyl esterification of L-isoaspartyl residues in peptides and proteins that result from spontaneous decomposition of normal L-aspartyl and L-asparaginyl residues. It plays a role in the repair and/or degradation of damaged proteins. The protein is Protein-L-isoaspartate O-methyltransferase of Yersinia pseudotuberculosis serotype O:1b (strain IP 31758).